We begin with the raw amino-acid sequence, 102 residues long: MEKIQKMISEKSVVIFSNNSCCMSHTIKTLFLDLGVNPTIYELDEINRGKEIEYALAQLGCSPTVPVVFIGGQLVGGANQVMSLHLNRSLIPMLKRFGALWL.

The 101-residue stretch at 1-101 (MEKIQKMISE…PMLKRFGALW (101 aa)) folds into the Glutaredoxin domain. C21 serves as a coordination point for [2Fe-2S] cluster. The short motif at 99–102 (ALWL) is the Responsive for interaction with TGA factors element.

Belongs to the glutaredoxin family. CC-type subfamily.

The protein localises to the cytoplasm. It is found in the nucleus. Its function is as follows. May only reduce GSH-thiol disulfides, but not protein disulfides. The protein is Monothiol glutaredoxin-S8 (GRXS8) of Arabidopsis thaliana (Mouse-ear cress).